An 865-amino-acid chain; its full sequence is Leucine--tRNA ligase (865 aa).

The 'HIGH' region signature appears at 36-46 (PYPSGKIHMGH). Positions 608–612 (KMSKS) match the 'KMSKS' region motif. Lys-611 serves as a coordination point for ATP.

Belongs to the class-I aminoacyl-tRNA synthetase family.

The protein localises to the cytoplasm. The enzyme catalyses tRNA(Leu) + L-leucine + ATP = L-leucyl-tRNA(Leu) + AMP + diphosphate. This is Leucine--tRNA ligase from Wolbachia sp. subsp. Brugia malayi (strain TRS).